The chain runs to 304 residues: ADP-ribosyl cyclase/cyclic ADP-ribose hydrolase 1 (304 aa).

Topologically, residues 1–21 are cytoplasmic; that stretch reads MANYEFSQVSGDRPGCRLSRK. A helical; Signal-anchor for type II membrane protein transmembrane segment spans residues 22-44; it reads AQIGLGVGLLVLIALVVGIVVIL. Residues 45–304 lie on the Extracellular side of the membrane; it reads LRPRSLLVWT…PEHPSCRLNT (260 aa). Intrachain disulfides connect cysteine 70-cysteine 86, cysteine 103-cysteine 184, and cysteine 164-cysteine 177. N-linked (GlcNAc...) asparagine glycosylation is present at asparagine 104. Residue cysteine 123 is part of the active site. A glycan (N-linked (GlcNAc...) asparagine) is linked at asparagine 124. Residue cysteine 205 is part of the active site. N-linked (GlcNAc...) asparagine glycans are attached at residues asparagine 213 and asparagine 223. 2 disulfides stabilise this stretch: cysteine 258-cysteine 279 and cysteine 291-cysteine 300.

It belongs to the ADP-ribosyl cyclase family. In terms of assembly, homodimer.

It localises to the membrane. It carries out the reaction NAD(+) = cyclic ADP-beta-D-ribose + nicotinamide + H(+). The enzyme catalyses nicotinate + NADP(+) = nicotinate-adenine dinucleotide phosphate + nicotinamide. It catalyses the reaction NAD(+) + H2O = ADP-D-ribose + nicotinamide + H(+). Its function is as follows. Synthesizes the second messengers cyclic ADP-ribose (cADPR) and nicotinate-adenine dinucleotide phosphate (NAADP), the former a second messenger for glucose-induced insulin secretion, the latter a Ca(2+) mobilizer. Also has cADPR hydrolase activity. The chain is ADP-ribosyl cyclase/cyclic ADP-ribose hydrolase 1 (Cd38) from Mus musculus (Mouse).